Here is a 711-residue protein sequence, read N- to C-terminus: L-type lectin-domain containing receptor kinase VIII.2 (711 aa).

The signal sequence occupies residues 1–30 (MLKLPPRFFSVYSTLIHILASFLCSSDVRG). Over 31–315 (DFPATRFDLG…NKLCKKSPAA (285 aa)) the chain is Extracellular. The interval 35–260 (TRFDLGTLTL…IHSVDWWSFS (226 aa)) is legume-lectin like. Residue Asn-57 is glycosylated (N-linked (GlcNAc...) asparagine). The tract at residues 265 to 306 (ESSESPPPMPNSPPPSSPSSSITPSLSTVRRKTADPSSSCRN) is disordered. Positions 269 to 281 (SPPPMPNSPPPSS) are enriched in pro residues. The span at 282–291 (PSSSITPSLS) shows a compositional bias: low complexity. The chain crosses the membrane as a helical span at residues 316 to 336 (VAGVVTAGAFFLALFAGVIIW). Residues 337-711 (VYSKKIKYTR…IFIVGKDRSV (375 aa)) lie on the Cytoplasmic side of the membrane. The region spanning 374-656 (FSSSRVIGNG…LVGEADVPEV (283 aa)) is the Protein kinase domain. ATP-binding positions include 380–388 (IGNGAFGTV) and Lys-403. Asp-497 functions as the Proton acceptor in the catalytic mechanism.

In the C-terminal section; belongs to the protein kinase superfamily. Ser/Thr protein kinase family. It in the N-terminal section; belongs to the leguminous lectin family.

It is found in the cell membrane. The catalysed reaction is L-seryl-[protein] + ATP = O-phospho-L-seryl-[protein] + ADP + H(+). The enzyme catalyses L-threonyl-[protein] + ATP = O-phospho-L-threonyl-[protein] + ADP + H(+). Functionally, involved in resistance response to the pathogenic oomycetes Phytophthora infestans and Phytophthora capsici. The chain is L-type lectin-domain containing receptor kinase VIII.2 from Arabidopsis thaliana (Mouse-ear cress).